The sequence spans 101 residues: Small ribosomal subunit protein uS14 (101 aa).

This sequence belongs to the universal ribosomal protein uS14 family. In terms of assembly, part of the 30S ribosomal subunit. Contacts proteins S3 and S10.

Binds 16S rRNA, required for the assembly of 30S particles and may also be responsible for determining the conformation of the 16S rRNA at the A site. In Synechococcus sp. (strain JA-2-3B'a(2-13)) (Cyanobacteria bacterium Yellowstone B-Prime), this protein is Small ribosomal subunit protein uS14.